The sequence spans 318 residues: 1-aminocyclopropane-1-carboxylate oxidase (318 aa).

A Fe2OG dioxygenase domain is found at 151-251 (PTFGTKVSNY…RMSIASFYNP (101 aa)). His175, Asp177, and His232 together coordinate Fe cation.

Belongs to the iron/ascorbate-dependent oxidoreductase family. Fe cation is required as a cofactor.

The catalysed reaction is 1-aminocyclopropane-1-carboxylate + L-ascorbate + O2 = ethene + L-dehydroascorbate + hydrogen cyanide + CO2 + 2 H2O. It functions in the pathway alkene biosynthesis; ethylene biosynthesis via S-adenosyl-L-methionine; ethylene from S-adenosyl-L-methionine: step 2/2. This is 1-aminocyclopropane-1-carboxylate oxidase (ACO) from Dendrobium crumenatum (Tropical pigeon orchid).